The primary structure comprises 117 residues: uncharacterized protein (117 aa).

A helical membrane pass occupies residues M1–S21. A coiled-coil region spans residues L38–K67.

It localises to the cell membrane. This is an uncharacterized protein from Bacillus subtilis (strain 168).